A 206-amino-acid chain; its full sequence is uncharacterized protein (206 aa).

The signal sequence occupies residues 1-18 (MSSLVLIPCALLTQGIYA).

This is an uncharacterized protein from Acanthamoeba polyphaga mimivirus (APMV).